A 152-amino-acid chain; its full sequence is Transcriptional regulator MraZ (152 aa).

SpoVT-AbrB domains are found at residues 5–52 and 81–124; these read ATLV…PLPE and ASEC…DETT.

Belongs to the MraZ family. In terms of assembly, forms oligomers.

It is found in the cytoplasm. It localises to the nucleoid. Negatively regulates its own expression and that of the subsequent genes in the proximal part of the division and cell wall (dcw) gene cluster. Acts by binding directly to DNA. May also regulate the expression of genes outside the dcw cluster. The polypeptide is Transcriptional regulator MraZ (Klebsiella pneumoniae subsp. pneumoniae (strain ATCC 700721 / MGH 78578)).